Here is a 319-residue protein sequence, read N- to C-terminus: ATP-dependent 6-phosphofructokinase (319 aa).

Gly-11 lines the ATP pocket. 21-25 (RAVVR) lines the ADP pocket. Residues 72–73 (RC) and 102–105 (GEGS) contribute to the ATP site. Position 103 (Glu-103) interacts with Mg(2+). A substrate-binding site is contributed by 126–128 (TID). The active-site Proton acceptor is Asp-128. Lys-155 is an ADP binding site. Residues Arg-163 and 170–172 (MGR) each bind substrate. Residues 186-188 (GAE), Arg-212, and 214-216 (KIN) each bind ADP. Residues Glu-223, Arg-244, and 250–253 (HVQR) each bind substrate.

It belongs to the phosphofructokinase type A (PFKA) family. ATP-dependent PFK group I subfamily. Prokaryotic clade 'B1' sub-subfamily. Homotetramer. It depends on Mg(2+) as a cofactor.

It is found in the cytoplasm. It catalyses the reaction beta-D-fructose 6-phosphate + ATP = beta-D-fructose 1,6-bisphosphate + ADP + H(+). The protein operates within carbohydrate degradation; glycolysis; D-glyceraldehyde 3-phosphate and glycerone phosphate from D-glucose: step 3/4. Allosterically activated by ADP and other diphosphonucleosides, and allosterically inhibited by phosphoenolpyruvate. Catalyzes the phosphorylation of D-fructose 6-phosphate to fructose 1,6-bisphosphate by ATP, the first committing step of glycolysis. The protein is ATP-dependent 6-phosphofructokinase of Thermotoga neapolitana (strain ATCC 49049 / DSM 4359 / NBRC 107923 / NS-E).